The chain runs to 448 residues: Na(+)-translocating NADH-quinone reductase subunit A (448 aa).

The protein belongs to the NqrA family. In terms of assembly, composed of six subunits; NqrA, NqrB, NqrC, NqrD, NqrE and NqrF.

The catalysed reaction is a ubiquinone + n Na(+)(in) + NADH + H(+) = a ubiquinol + n Na(+)(out) + NAD(+). Functionally, NQR complex catalyzes the reduction of ubiquinone-1 to ubiquinol by two successive reactions, coupled with the transport of Na(+) ions from the cytoplasm to the periplasm. NqrA to NqrE are probably involved in the second step, the conversion of ubisemiquinone to ubiquinol. The polypeptide is Na(+)-translocating NADH-quinone reductase subunit A (Glaesserella parasuis serovar 5 (strain SH0165) (Haemophilus parasuis)).